A 704-amino-acid chain; its full sequence is MMKHPQDLSVTDDQQLMKVNKVEKMEQELHDPESESHIMHADALASAYPAASQPHSPIGLALSPNGGGLGLSNSSNQSSENFALCNGNGNAGSAGGGSASSGSNNNNSMFSPNNNLSGSGSGTNSSQQQLQQQQQQQSPTVCAICGDRATGKHYGASSCDGCKGFFRRSVRKNHQYTCRFARNCVVDKDKRNQCRYCRLRKCFKAGMKKEAVQNERDRISCRRTSNDDPDPGNGLSVISLVKAENESRQSKAGAAMEPNINEDLSNKQFASINDVCESMKQQLLTLVEWAKQIPAFNELQLDDQVALLRAHAGEHLLLGLSRRSMHLKDVLLLSNNCVITRHCPDPLVSPNLDISRIGARIIDELVTVMKDVGIDDTEFACIKALVFFDPNAKGLNEPHRIKSLRHQILNNLEDYISDRQYESRGRFGEILLILPVLQSITWQMIEQIQFAKIFGVAHIDSLLQEMLLGGELADNPLPLSPPNQSNDYQSPTHTGNMEGGNQVNSSLDSLATSGGPGSHSLDLEVQHIQALIEANSADDSFRAYAASTAAAAAAAVSSSSSAPASVAPASISPPLNSPKSQHQHQQHATHQQQQESSYLDMPVKHYNGSRSGPLPTQHSPQRMHPYQRAVASPVEVSSGGGGLGLRNPADITLNEYNRSEGSSAEELLRRTPLKIRAPEMLTAPAGYGTEPCRMTLKQEPETGY.

The disordered stretch occupies residues 93 to 133 (SAGGGSASSGSNNNNSMFSPNNNLSGSGSGTNSSQQQLQQQ). A compositionally biased stretch (low complexity) spans 100 to 133 (SSGSNNNNSMFSPNNNLSGSGSGTNSSQQQLQQQ). The segment at residues 139 to 214 (PTVCAICGDR…AGMKKEAVQN (76 aa)) is a DNA-binding region (nuclear receptor). 2 NR C4-type zinc fingers span residues 142 to 162 (CAIC…CDGC) and 178 to 197 (CRFA…CRYC). In terms of domain architecture, NR LBD spans 232-470 (GNGLSVISLV…SLLQEMLLGG (239 aa)). Disordered regions lie at residues 474 to 520 (DNPL…GSHS), 563 to 624 (PASV…QRMH), and 684 to 704 (PAGY…ETGY). A compositionally biased stretch (polar residues) spans 487–512 (DYQSPTHTGNMEGGNQVNSSLDSLAT). Residues 563–574 (PASVAPASISPP) show a composition bias toward low complexity. The span at 608-620 (GSRSGPLPTQHSP) shows a compositional bias: polar residues.

It belongs to the nuclear hormone receptor family. NR2 subfamily. In terms of assembly, homodimer. As to expression, in third instar larvae, expressed at high levels in midgut and attached gastric caeca, fat body, Malpighian tubules and oenocytes, and at lower levels in proventriculus, salivary glands, epidermis, brain and ring gland. Not detected in imaginal disks and the median neurosecretory cells that produce insulin-like peptides (at protein level). In developing embryos, expressed in mid-gut, fat bodies and the distal region of Malpighian tubules.

The protein resides in the nucleus. Transcriptionally controlled transcription factor. Important for the differentiation of various specialized cell types that arise from both endoderm and mesoderm. May have a role in early gut formation. Plays an essential role in lipid catabolism, regulating lipid mobilization and beta-oxidation in response to nutrient deprivation. The sequence is that of Transcription factor HNF-4 homolog (Hnf4) from Drosophila melanogaster (Fruit fly).